The primary structure comprises 475 residues: UDP-glucosyltransferase 102 (475 aa).

Residues S278, 344–345, 362–370, and 384–387 contribute to the UDP-alpha-D-glucose site; these read WA, HCGWNSTLE, and YGEQ.

The protein belongs to the UDP-glycosyltransferase family.

Its pathway is secondary metabolite biosynthesis; terpenoid biosynthesis. Probable component of the triterpene saponins (e.g. ginsenosides) biosynthetic pathway. No detectable activity toward protopanaxatriol (PPT). This Panax ginseng (Korean ginseng) protein is UDP-glucosyltransferase 102 (UGT102).